Consider the following 206-residue polypeptide: MAVGEVMRMEIPAGGDLTVTTPELHVLAVDDSIVDRKVIERLLRISSCKVTTVESGTRALQYLGLDGGKGASNLKDLKVNLIVTDYSMPGLSGYDLLKKIKESSAFREVPVVIMSSENILPRIQECLKEGAEEFLLKPVKLADVKRIKQLIMRNEAEECKILSHSNKRKLQEDSDTSSSSHDDTSIKDSSCSKRMKSESENLFSLL.

One can recognise a Response regulatory domain in the interval H25 to M152. A 4-aspartylphosphate modification is found at D85. Residues S165–L206 are disordered.

The protein belongs to the ARR family. Type-A subfamily. In terms of processing, two-component system major event consists of a His-to-Asp phosphorelay between a sensor histidine kinase (HK) and a response regulator (RR). In plants, the His-to-Asp phosphorelay involves an additional intermediate named Histidine-containing phosphotransfer protein (HPt). This multistep phosphorelay consists of a His-Asp-His-Asp sequential transfer of a phosphate group between first a His and an Asp of the HK protein, followed by the transfer to a conserved His of the HPt protein and finally the transfer to an Asp in the receiver domain of the RR protein. As to expression, predominantly expressed in roots and young flowers.

It is found in the nucleus. Functionally, functions as a response regulator involved in His-to-Asp phosphorelay signal transduction system. Phosphorylation of the Asp residue in the receiver domain activates the ability of the protein to promote the transcription of target genes. Type-A response regulators seem to act as negative regulators of the cytokinin signaling. The protein is Two-component response regulator ARR7 (ARR7) of Arabidopsis thaliana (Mouse-ear cress).